The primary structure comprises 163 residues: Small ribosomal subunit protein uS5 (163 aa).

An S5 DRBM domain is found at 8–71; that stretch reads LVEKIVYLNR…ERAKKDMVQI (64 aa).

This sequence belongs to the universal ribosomal protein uS5 family. As to quaternary structure, part of the 30S ribosomal subunit. Contacts proteins S4 and S8.

Functionally, with S4 and S12 plays an important role in translational accuracy. In terms of biological role, located at the back of the 30S subunit body where it stabilizes the conformation of the head with respect to the body. This chain is Small ribosomal subunit protein uS5, found in Nitratidesulfovibrio vulgaris (strain DSM 19637 / Miyazaki F) (Desulfovibrio vulgaris).